Consider the following 653-residue polypeptide: MHCLGAEYLVSAEGAPRQREWRPQIYRKCTDTAWLFLFFLFWTGLVFIMGYSVVAGAAGRLLFGYDSFGNMCGKKNSPVEGAPLSGQDMTLKKHVFFMNSCNLEVKGTQLNRMALCVSNCPEEQLDSLEEVQFFANTSGSFLCVYSLNSFNYTHSPKADSLCPRLPVPPSKSFPLFNRCVPQTPECYSLFASVLINDVDTLHRILSGIMSGRDTILGLCILALALSLAMMFTFRFITTLLVHIFISLVILGLLFVCGVLWWLYYDYTNDLSIELDTERENMKCVLGFAIVSTGITAVLLVLIFVLRKRIKLTVELFQITNKAISSAPFLLFQPLWTFAILIFFWVLWVAVLLSLGTAGAAQVMEGGQVEYKPLSGIRYMWSYHLIGLIWTSEFILACQQMTIAGAVVTCYFNRSKNDPPDHPILSSLSILFFYHQGTVVKGSFLISVVRIPRIIVMYMQNALKEQQHGALSRYLFRCCYCCFWCLDKYLLHLNQNAYTTTAINGTDFCTSAKDAFKILSKNSSHFTSINCFGDFIIFLGKVLVVCFTVFGGLMAFNYNRAFQVWAVPLLLVAFFAYLVAHSFLSVFETVLDALFLCFAVDLETNDGSSEKPYFMDQEFLSFVKRSNKLNNARAQQDKHSLRNEEGTELQAIVR.

Residues 34-54 form a helical membrane-spanning segment; it reads WLFLFFLFWTGLVFIMGYSVV. 2 N-linked (GlcNAc...) asparagine glycosylation sites follow: asparagine 136 and asparagine 151. 5 helical membrane passes run 213 to 233, 243 to 263, 284 to 304, 334 to 354, and 384 to 404; these read DTILGLCILALALSLAMMFTF, IFISLVILGLLFVCGVLWWLY, VLGFAIVSTGITAVLLVLIFV, LWTFAILIFFWVLWVAVLLSL, and LIGLIWTSEFILACQQMTIAG. N-linked (GlcNAc...) asparagine glycosylation is found at asparagine 412, asparagine 503, and asparagine 521. Helical transmembrane passes span 534-554 and 563-583; these read FIIFLGKVLVVCFTVFGGLMA and VWAVPLLLVAFFAYLVAHSFL. Residues 632-653 form a disordered region; sequence RAQQDKHSLRNEEGTELQAIVR. A compositionally biased stretch (basic and acidic residues) spans 634 to 644; the sequence is QQDKHSLRNEE.

It belongs to the CTL (choline transporter-like) family.

It localises to the membrane. This Homo sapiens (Human) protein is Choline transporter-like protein 3 (SLC44A3).